A 90-amino-acid chain; its full sequence is Small ribosomal subunit protein uS15 (90 aa).

The protein belongs to the universal ribosomal protein uS15 family. As to quaternary structure, part of the 30S ribosomal subunit. Forms a bridge to the 50S subunit in the 70S ribosome, contacting the 23S rRNA.

In terms of biological role, one of the primary rRNA binding proteins, it binds directly to 16S rRNA where it helps nucleate assembly of the platform of the 30S subunit by binding and bridging several RNA helices of the 16S rRNA. Its function is as follows. Forms an intersubunit bridge (bridge B4) with the 23S rRNA of the 50S subunit in the ribosome. This is Small ribosomal subunit protein uS15 from Campylobacter fetus subsp. fetus (strain 82-40).